Consider the following 27-residue polypeptide: Conotoxin as14a (27 aa).

Intrachain disulfides connect C6-C26 and C10-C22.

This sequence belongs to the conotoxin L superfamily. Expressed by the venom duct.

Its subcellular location is the secreted. In terms of biological role, in vivo, intracranial injection, elicits scratching and grooming activity in mice. This chain is Conotoxin as14a, found in Conus cancellatus (Cancellate cone).